A 608-amino-acid chain; its full sequence is uncharacterized protein (608 aa).

The N-terminal stretch at 1 to 38 (MWLQQRLKVFPGLLSSSWARRVLAVSGFLVIIYWYIFS) is a signal peptide. At 39 to 563 (GSLFRSFWYA…EEHMAKQYRG (525 aa)) the chain is on the extracellular side. Residue N337 is glycosylated (N-linked (GlcNAc...) asparagine). The helical transmembrane segment at 564–584 (LPFLFWFSVASLITLFHLFLF) threads the bilayer. At 585–608 (KLIYNEYCGPGAKPLFRSKEDTSV) the chain is on the cytoplasmic side.

The protein localises to the membrane. This is an uncharacterized protein from Xenopus tropicalis (Western clawed frog).